Consider the following 227-residue polypeptide: PKHD-type hydroxylase CC_0027 (227 aa).

The region spanning 78–178 is the Fe2OG dioxygenase domain; that stretch reads TILSPMFNRY…RTASFFWIQS (101 aa). 3 residues coordinate Fe cation: H96, D98, and H159. A 2-oxoglutarate-binding site is contributed by R169.

Fe(2+) serves as cofactor. It depends on L-ascorbate as a cofactor.

The protein is PKHD-type hydroxylase CC_0027 of Caulobacter vibrioides (strain ATCC 19089 / CIP 103742 / CB 15) (Caulobacter crescentus).